Reading from the N-terminus, the 150-residue chain is MQIILLDKVVNLGNLGEIVKVKDGYARNFLIPSGRARRATEANKAEFEAKRAELEKAAAAKLAEAQAQGEKLGGTTVKLTQKAGVDGRLFGSVTNHDIAEELNKQGYKIAKSQVRLPSGPIKTVGDSTVSVALHTDVVVEVTVSVYGETA.

This sequence belongs to the bacterial ribosomal protein bL9 family.

Binds to the 23S rRNA. This is Large ribosomal subunit protein bL9 from Paracidovorax citrulli (strain AAC00-1) (Acidovorax citrulli).